The following is a 663-amino-acid chain: Methionine--tRNA ligase (663 aa).

The 'HIGH' region motif lies at 10–20 (AYTNGPLHLGH). 4 residues coordinate Zn(2+): Cys142, Cys145, Cys154, and Cys157. A 'KMSKS' region motif is present at residues 323-327 (KMSTS). Residue Thr326 participates in ATP binding. One can recognise a tRNA-binding domain in the interval 563 to 663 (YFGNIDLRVG…RDLPVGSKIH (101 aa)).

It belongs to the class-I aminoacyl-tRNA synthetase family. MetG type 1 subfamily. In terms of assembly, homodimer. It depends on Zn(2+) as a cofactor.

It is found in the cytoplasm. The enzyme catalyses tRNA(Met) + L-methionine + ATP = L-methionyl-tRNA(Met) + AMP + diphosphate. Functionally, is required not only for elongation of protein synthesis but also for the initiation of all mRNA translation through initiator tRNA(fMet) aminoacylation. This chain is Methionine--tRNA ligase, found in Methanococcus maripaludis (strain C5 / ATCC BAA-1333).